The chain runs to 334 residues: Aspartate carbamoyltransferase catalytic subunit (334 aa).

2 residues coordinate carbamoyl phosphate: arginine 71 and threonine 72. Lysine 99 is an L-aspartate binding site. Residues arginine 121, histidine 151, and glutamine 154 each coordinate carbamoyl phosphate. Residues arginine 184 and arginine 239 each contribute to the L-aspartate site. Residues glycine 280 and proline 281 each contribute to the carbamoyl phosphate site.

Belongs to the aspartate/ornithine carbamoyltransferase superfamily. ATCase family. As to quaternary structure, heterododecamer (2C3:3R2) of six catalytic PyrB chains organized as two trimers (C3), and six regulatory PyrI chains organized as three dimers (R2).

The catalysed reaction is carbamoyl phosphate + L-aspartate = N-carbamoyl-L-aspartate + phosphate + H(+). The protein operates within pyrimidine metabolism; UMP biosynthesis via de novo pathway; (S)-dihydroorotate from bicarbonate: step 2/3. In terms of biological role, catalyzes the condensation of carbamoyl phosphate and aspartate to form carbamoyl aspartate and inorganic phosphate, the committed step in the de novo pyrimidine nucleotide biosynthesis pathway. The polypeptide is Aspartate carbamoyltransferase catalytic subunit (Pseudomonas fluorescens (strain Pf0-1)).